A 411-amino-acid chain; its full sequence is S-adenosylmethionine synthase (411 aa).

Histidine 15 contributes to the ATP binding site. A Mg(2+)-binding site is contributed by aspartate 17. Glutamate 43 is a binding site for K(+). The L-methionine site is built by glutamate 56 and glutamine 100. Residues glutamine 100 to glutamate 110 are flexible loop. Residues aspartate 171–lysine 173, lysine 248–phenylalanine 249, aspartate 257, arginine 263–lysine 264, alanine 280, and lysine 284 contribute to the ATP site. Aspartate 257 serves as a coordination point for L-methionine. Lysine 288 is an L-methionine binding site.

It belongs to the AdoMet synthase family. Homotetramer; dimer of dimers. It depends on Mg(2+) as a cofactor. Requires K(+) as cofactor.

It is found in the cytoplasm. It catalyses the reaction L-methionine + ATP + H2O = S-adenosyl-L-methionine + phosphate + diphosphate. The protein operates within amino-acid biosynthesis; S-adenosyl-L-methionine biosynthesis; S-adenosyl-L-methionine from L-methionine: step 1/1. Functionally, catalyzes the formation of S-adenosylmethionine (AdoMet) from methionine and ATP. The overall synthetic reaction is composed of two sequential steps, AdoMet formation and the subsequent tripolyphosphate hydrolysis which occurs prior to release of AdoMet from the enzyme. The protein is S-adenosylmethionine synthase of Synechococcus sp. (strain CC9605).